A 226-amino-acid polypeptide reads, in one-letter code: Low-molecular weight cobalt-containing nitrile hydratase subunit beta (226 aa).

A disordered region spans residues 1–22; it reads MDGIHDLGGRAGLGPIKPESDE.

Belongs to the nitrile hydratase subunit beta family. In terms of assembly, heterodimer of an alpha and a beta chain.

The catalysed reaction is an aliphatic primary amide = an aliphatic nitrile + H2O. Functionally, NHase catalyzes the hydration of various nitrile compounds to the corresponding amides. In Rhodococcus rhodochrous, this protein is Low-molecular weight cobalt-containing nitrile hydratase subunit beta.